We begin with the raw amino-acid sequence, 432 residues long: Glutamate-1-semialdehyde 2,1-aminomutase (432 aa).

Lysine 271 is modified (N6-(pyridoxal phosphate)lysine).

This sequence belongs to the class-III pyridoxal-phosphate-dependent aminotransferase family. HemL subfamily. In terms of assembly, homodimer. Requires pyridoxal 5'-phosphate as cofactor.

Its subcellular location is the cytoplasm. It catalyses the reaction (S)-4-amino-5-oxopentanoate = 5-aminolevulinate. The protein operates within porphyrin-containing compound metabolism; protoporphyrin-IX biosynthesis; 5-aminolevulinate from L-glutamyl-tRNA(Glu): step 2/2. It participates in porphyrin-containing compound metabolism; chlorophyll biosynthesis. In Prochlorococcus marinus (strain NATL2A), this protein is Glutamate-1-semialdehyde 2,1-aminomutase.